Here is a 312-residue protein sequence, read N- to C-terminus: Acetylglutamate kinase (312 aa).

Substrate is bound by residues 77–78 (GG), Arg-99, and Asn-192.

The protein belongs to the acetylglutamate kinase family. ArgB subfamily.

It is found in the cytoplasm. The enzyme catalyses N-acetyl-L-glutamate + ATP = N-acetyl-L-glutamyl 5-phosphate + ADP. It functions in the pathway amino-acid biosynthesis; L-arginine biosynthesis; N(2)-acetyl-L-ornithine from L-glutamate: step 2/4. Catalyzes the ATP-dependent phosphorylation of N-acetyl-L-glutamate. The protein is Acetylglutamate kinase of Synechococcus sp. (strain JA-2-3B'a(2-13)) (Cyanobacteria bacterium Yellowstone B-Prime).